The sequence spans 327 residues: Phenylalanine--tRNA ligase alpha subunit (327 aa).

Position 252 (Glu252) interacts with Mg(2+).

It belongs to the class-II aminoacyl-tRNA synthetase family. Phe-tRNA synthetase alpha subunit type 1 subfamily. As to quaternary structure, tetramer of two alpha and two beta subunits. It depends on Mg(2+) as a cofactor.

The protein resides in the cytoplasm. It catalyses the reaction tRNA(Phe) + L-phenylalanine + ATP = L-phenylalanyl-tRNA(Phe) + AMP + diphosphate + H(+). The polypeptide is Phenylalanine--tRNA ligase alpha subunit (Yersinia pestis bv. Antiqua (strain Angola)).